We begin with the raw amino-acid sequence, 271 residues long: Insulin-like growth factor-binding protein 5 (271 aa).

The N-terminal stretch at 1–19 (MVISVVLLLLAACAVPAQG) is a signal peptide. An IGFBP N-terminal domain is found at 22-102 (SFVHCEPCDE…LHGRGVCLNE (81 aa)). 6 disulfides stabilise this stretch: Cys-26/Cys-52, Cys-29/Cys-54, Cys-37/Cys-55, Cys-44/Cys-58, Cys-66/Cys-79, and Cys-73/Cys-99. A compositionally biased stretch (basic and acidic residues) spans 109-121 (TKIERDSREHEEP). The interval 109–129 (TKIERDSREHEEPTTSEMAEE) is disordered. The residue at position 115 (Ser-115) is a Phosphoserine. A Thyroglobulin type-1 domain is found at 188–262 (QGPCRRHMEA…MEYVDGDFQC (75 aa)). 3 cysteine pairs are disulfide-bonded: Cys-191–Cys-218, Cys-229–Cys-240, and Cys-242–Cys-262.

In terms of assembly, interacts with IGF1; this interaction enhances the growth stimulatory effects of IGF1 on fibroblasts. Interacts with CAV1; this interaction allows trafficking of IGFBP5 from the plasma membrane to the nucleus. Interacts with NCL; this interaction is necessary for IGFBP5 localization to the nucleus. As to expression, mostly in kidney.

It localises to the secreted. The protein localises to the cytoplasm. The protein resides in the nucleus. In terms of biological role, multifunctional protein that plays a critical role in regulating the availability of IGFs to their receptors and thereby regulates IGF-mediated cellular processes including proliferation, differentiation, and apoptosis in a cell-type specific manner. Increases the cell proliferation of osteoblasts, intestinal smooth muscle cells and neuroblastoma cells. Enhances adhesion and survival of epithelial cells but decreases adhesion of mesenchymal cells. Once secreted, acts as a major mediator of mTORC1-dependent feedback inhibition of IGF1 signaling. Also plays a role in the induction of extracellular matrix (ECM) production and deposition independently of its nuclear translocation and binding to IGFs. Acts itself as a growth factor that can act independently of IGFs to regulate bone formation. Acts as a ligand for the ROR1 receptor which triggers formation of ROR1/HER2 heterodimer to enhance CREB oncogenic signaling. This is Insulin-like growth factor-binding protein 5 (Igfbp5) from Rattus norvegicus (Rat).